The chain runs to 532 residues: Ankyrin repeat-containing protein At2g01680 (532 aa).

7 ANK repeats span residues 9–38, 58–89, 93–122, 127–156, 161–190, 195–224, and 229–259; these read LTHQ…GDEL, AGET…TVKI, SDMN…ELCR, SNTS…SCAM, NGKT…AIVG, KGQT…TILN, and KGNT…EVNA. 4 helical membrane-spanning segments follow: residues 354–374, 396–416, 436–456, and 467–487; these read ITVV…NLPG, VFCL…VVQI, LMWA…FAVV, and ITLL…YFVF.

Its subcellular location is the membrane. The protein is Ankyrin repeat-containing protein At2g01680 of Arabidopsis thaliana (Mouse-ear cress).